The primary structure comprises 183 residues: Calcium-binding protein M (183 aa).

The N-myristoyl glycine moiety is linked to residue Gly-2. EF-hand domains lie at 25-60 (EEVA…KLPN), 61-96 (YPED…IGKG), 97-132 (SAED…MKNV), and 142-177 (DIEL…SPSL). Residues Asp-74, Asp-76, Ser-78, Thr-80, Glu-85, Asp-110, Asp-112, Ser-114, Glu-121, Asp-155, Asp-157, Asn-159, and Glu-166 each contribute to the Ca(2+) site.

The protein belongs to the recoverin family.

The polypeptide is Calcium-binding protein M (cbpM) (Dictyostelium discoideum (Social amoeba)).